The chain runs to 734 residues: MATKFPKFSQGLAQDPTTRRIWFGIATAHDFESHDGITEESLYQKIFASHFGQLAIIFLWTSGNLFHVAWQGNFEQWTKDPLHVRPIAHAIWDPHFGQPAVEAFTRGGASNPVNIAYSGVYQWWYTIGLRTNNDLYTGALFLLIVSAVALFAGWLHLQPKFQPSLSWFKNAESRLNHHLSGLFGVSSLAWTGHLVHVAIPESRGQHVGWDNFLSVLPHPQGLGPFFTGSWGVYAQNPDSTSHLFNTSEGAGTAILTFLGGFHPQTQSLWLTDIAHHHLAIAVLFIIAGHMYRTNFGIGHSMKEILDSHVPPAGGLGAGHKGLYDTVNNSLHFQLGLALASLGVVTSLVAQHMYSLPPYAFLAQDFTTQAALYTHHQYIAGFIMTGAFAHGAIFFVRDYDPELNKDNVLARMLEHKEAIISHLSWASLFLGFHTLGLYVHNDVMQAFGTPEKQILIEPVFAQWIQSAHGKALYGFDVLLSSANSPASSASQSIWLPGWLDAINNNTNSLFLTIGPGDFLVHHAIALGLHTTTLILVKGALDARGSKLMPDKKDFGYAFPCDGPGRGGTCDISAWDAFYLAVFWMLNTIGWVTFYWHWKHLTLWQGNVAQFNESSTYLMGWLRDYLWLNSSQLINGYNPFGMNSLSVWAWMFLFGHLVWATGFMFLISWRGYWQELIETLAWAHERTPLANLVRWKDKPVALSIVQARLVGLAHFSVGYVLTYAAFLIASTSGKFG.

Helical transmembrane passes span 46 to 69 (IFAS…FHVA), 135 to 158 (LYTG…LHLQ), 175 to 199 (LNHH…HVAI), 273 to 291 (IAHH…GHMY), 330 to 353 (LHFQ…QHMY), 369 to 395 (AALY…IFFV), 417 to 439 (AIIS…LYVH), and 517 to 535 (FLVH…LILV). [4Fe-4S] cluster-binding residues include cysteine 559 and cysteine 568. Transmembrane regions (helical) follow at residues 575–596 (AFYL…YWHW) and 643–665 (LSVW…MFLI). Chlorophyll a contacts are provided by histidine 654, methionine 662, and tyrosine 670. Tryptophan 671 is a binding site for phylloquinone. The helical transmembrane segment at 707–727 (LVGLAHFSVGYVLTYAAFLIA) threads the bilayer.

It belongs to the PsaA/PsaB family. The PsaA/B heterodimer binds the P700 chlorophyll special pair and subsequent electron acceptors. PSI consists of a core antenna complex that captures photons, and an electron transfer chain that converts photonic excitation into a charge separation. The eukaryotic PSI reaction center is composed of at least 11 subunits. P700 is a chlorophyll a/chlorophyll a' dimer, A0 is one or more chlorophyll a, A1 is one or both phylloquinones and FX is a shared 4Fe-4S iron-sulfur center. serves as cofactor.

The protein localises to the plastid. Its subcellular location is the chloroplast thylakoid membrane. It carries out the reaction reduced [plastocyanin] + hnu + oxidized [2Fe-2S]-[ferredoxin] = oxidized [plastocyanin] + reduced [2Fe-2S]-[ferredoxin]. In terms of biological role, psaA and PsaB bind P700, the primary electron donor of photosystem I (PSI), as well as the electron acceptors A0, A1 and FX. PSI is a plastocyanin-ferredoxin oxidoreductase, converting photonic excitation into a charge separation, which transfers an electron from the donor P700 chlorophyll pair to the spectroscopically characterized acceptors A0, A1, FX, FA and FB in turn. Oxidized P700 is reduced on the lumenal side of the thylakoid membrane by plastocyanin. The protein is Photosystem I P700 chlorophyll a apoprotein A2 of Chlorokybus atmophyticus (Soil alga).